The sequence spans 108 residues: Thiosulfate sulfurtransferase GlpE (108 aa).

The region spanning Lys17–Glu105 is the Rhodanese domain. Cys65 functions as the Cysteine persulfide intermediate in the catalytic mechanism.

This sequence belongs to the GlpE family.

Its subcellular location is the cytoplasm. It carries out the reaction thiosulfate + hydrogen cyanide = thiocyanate + sulfite + 2 H(+). The enzyme catalyses thiosulfate + [thioredoxin]-dithiol = [thioredoxin]-disulfide + hydrogen sulfide + sulfite + 2 H(+). Its function is as follows. Transferase that catalyzes the transfer of sulfur from thiosulfate to thiophilic acceptors such as cyanide or dithiols. May function in a CysM-independent thiosulfate assimilation pathway by catalyzing the conversion of thiosulfate to sulfite, which can then be used for L-cysteine biosynthesis. This is Thiosulfate sulfurtransferase GlpE from Serratia proteamaculans (strain 568).